A 178-amino-acid polypeptide reads, in one-letter code: uncharacterized protein (178 aa).

4 helical membrane passes run 29–49 (AATG…AYLF), 76–96 (VISI…YFLL), 105–125 (PGIL…NPIF), and 139–159 (IITT…SISF).

The protein resides in the cell membrane. This is an uncharacterized protein from Bacillus subtilis (strain 168).